The primary structure comprises 295 residues: Transcription factor MYB34 (295 aa).

HTH myb-type domains lie at 9–61 and 62–116; these read EEGI…ANYL and RPDI…KKRL. 2 consecutive DNA-binding regions (H-T-H motif) follow at residues 37–61 and 89–112; these read WRTL…ANYL and WAAI…NTNL.

As to quaternary structure, can form complexes with MYC2, MYC3 or MYC4. Expressed in trichomes.

The protein localises to the nucleus. Its function is as follows. Transcription factor involved in tryptophan gene activation and in indole-3-acetic acid (IAA) and indolic glucosinolates (IG) biosynthesis. Acts as a direct transcriptional activator of both Trp synthesis genes and Trp secondary metabolism genes. This is Transcription factor MYB34 (MYB34) from Arabidopsis thaliana (Mouse-ear cress).